Consider the following 144-residue polypeptide: Large ribosomal subunit protein uL13 (144 aa).

Belongs to the universal ribosomal protein uL13 family. In terms of assembly, part of the 50S ribosomal subunit.

In terms of biological role, this protein is one of the early assembly proteins of the 50S ribosomal subunit, although it is not seen to bind rRNA by itself. It is important during the early stages of 50S assembly. This is Large ribosomal subunit protein uL13 from Nitrosomonas eutropha (strain DSM 101675 / C91 / Nm57).